The chain runs to 99 residues: NADH-quinone oxidoreductase subunit K (99 aa).

The next 3 helical transmembrane spans lie at 3–23 (PENY…GVLI), 28–48 (IIVF…FVTF), and 59–79 (VFAF…LAII).

It belongs to the complex I subunit 4L family. As to quaternary structure, NDH-1 is composed of 14 different subunits. Subunits NuoA, H, J, K, L, M, N constitute the membrane sector of the complex.

It is found in the cell membrane. The enzyme catalyses a quinone + NADH + 5 H(+)(in) = a quinol + NAD(+) + 4 H(+)(out). Functionally, NDH-1 shuttles electrons from NADH, via FMN and iron-sulfur (Fe-S) centers, to quinones in the respiratory chain. The immediate electron acceptor for the enzyme in this species is believed to be a menaquinone. Couples the redox reaction to proton translocation (for every two electrons transferred, four hydrogen ions are translocated across the cytoplasmic membrane), and thus conserves the redox energy in a proton gradient. This chain is NADH-quinone oxidoreductase subunit K, found in Rhodococcus jostii (strain RHA1).